Reading from the N-terminus, the 359-residue chain is Phospho-N-acetylmuramoyl-pentapeptide-transferase (359 aa).

Helical transmembrane passes span 3–23, 53–73, 84–104, 117–137, 156–176, 187–207, 231–251, 255–275, 283–303, and 330–350; these read QILF…PVLI, GGVA…LIGI, GLLV…DDFI, TAKL…ALQF, IATV…LVSA, LDGL…IITF, LALI…WNAA, IFMG…LSIT, VVIG…VAVF, and VIIR…ALFY.

Belongs to the glycosyltransferase 4 family. MraY subfamily. Mg(2+) is required as a cofactor.

It localises to the cell membrane. The enzyme catalyses UDP-N-acetyl-alpha-D-muramoyl-L-alanyl-gamma-D-glutamyl-meso-2,6-diaminopimeloyl-D-alanyl-D-alanine + di-trans,octa-cis-undecaprenyl phosphate = di-trans,octa-cis-undecaprenyl diphospho-N-acetyl-alpha-D-muramoyl-L-alanyl-D-glutamyl-meso-2,6-diaminopimeloyl-D-alanyl-D-alanine + UMP. It participates in cell wall biogenesis; peptidoglycan biosynthesis. Its function is as follows. Catalyzes the initial step of the lipid cycle reactions in the biosynthesis of the cell wall peptidoglycan: transfers peptidoglycan precursor phospho-MurNAc-pentapeptide from UDP-MurNAc-pentapeptide onto the lipid carrier undecaprenyl phosphate, yielding undecaprenyl-pyrophosphoryl-MurNAc-pentapeptide, known as lipid I. The sequence is that of Phospho-N-acetylmuramoyl-pentapeptide-transferase from Rhodococcus jostii (strain RHA1).